The primary structure comprises 1325 residues: Protein PHYTOCHROME-DEPENDENT LATE-FLOWERING (1325 aa).

Polar residues-rich tracts occupy residues 313–331 (IGST…SVSG) and 504–515 (NFPQTSWNVNPG). Disordered stretches follow at residues 313–371 (IGST…MPGL), 462–558 (EPFE…EFSG), 593–616 (ANEA…NSLP), 852–875 (VAGQ…NSTQ), and 1160–1325 (QQQQ…GNNS). A compositionally biased stretch (basic and acidic residues) spans 518–529 (IEKEPKKEEQFS). Residues 596–607 (AMQQRQHQAQMA) show a composition bias toward low complexity. The span at 863–875 (HGNTGNTPNNSTQ) shows a compositional bias: polar residues. The span at 1160–1224 (QQQQQQQLQQ…QQQATASPLQ (65 aa)) shows a compositional bias: low complexity. A compositionally biased stretch (polar residues) spans 1225 to 1239 (SVLSPPQVGSPSAGI). Positions 1240–1262 (TQQQLQQSSPQQMSQRTPMSPQQ) are enriched in low complexity. 2 stretches are compositionally biased toward polar residues: residues 1263-1286 (VNQR…TSNL) and 1293-1325 (PQLS…GNNS).

Component of a red light-dependent nuclear complex made of PHL, PHYB and CO. Interacts directly with PHYB and CO; CO binding requires the presence of PHYB. As to expression, mostly expressed in cotyledons and leaves, both in mesophyll and vasculature cells. Also present in roots, hypocotyls and shoot apices.

It localises to the nucleus. Its subcellular location is the nuclear body. It is found in the cytoplasmic granule. The protein resides in the cytoplasm. In terms of biological role, triggers photoperiod-monitored flowering by repressing PHYB-dependent flowering negative regulation, probably through physical interactions with PHYB and CO. The polypeptide is Protein PHYTOCHROME-DEPENDENT LATE-FLOWERING (Arabidopsis thaliana (Mouse-ear cress)).